The following is a 3225-amino-acid chain: Intermembrane lipid transfer protein VPS13 (3225 aa).

The involved in phospholipid binding stretch occupies residues M1–T1390. One can recognise a Chorein N-terminal domain in the interval L2–D115. 2 disordered regions span residues P1568 to V1610 and A1768 to G1799. Positions V1590 to V1610 are enriched in low complexity. Polar residues predominate over residues G1777–G1799. Residues F2290–K2570 enclose the SHR-BD domain.

This sequence belongs to the VPS13 family.

It localises to the membrane. Its function is as follows. Mediates the transfer of lipids between membranes at organelle contact sites. Binds phospholipids, including phosphatidylcholine (PC), phosphatidylethanolamine (PE), phosphatidic acid (PA), and phosphatidylserine (PS). May play a role in mitochondrial lipid homeostasis, Golgi vesicle transport, reticulophagy, actin cytoskeleton organization and formation of the prospore membrane. The chain is Intermembrane lipid transfer protein VPS13 from Chaetomium thermophilum (strain DSM 1495 / CBS 144.50 / IMI 039719) (Thermochaetoides thermophila).